We begin with the raw amino-acid sequence, 436 residues long: Cholecystokinin receptor type A (436 aa).

Topologically, residues 1–41 are extracellular; the sequence is MDVVDSLLMNGSNITPPCELGLENETLFCLDQPQPSKEWQS. Residues asparagine 10 and asparagine 24 are each glycosylated (N-linked (GlcNAc...) asparagine). An intrachain disulfide couples cysteine 18 to cysteine 29. A helical membrane pass occupies residues 42–67; that stretch reads AVQILLYSFIFLLSVLGNTLVITVLI. Over 68 to 77 the chain is Cytoplasmic; sequence RNKRMRTVTN. A helical membrane pass occupies residues 78-104; the sequence is IFLLSLAVSDLMLCLFCMPFNLIPNLL. At 105-115 the chain is on the extracellular side; it reads KDFIFGSAVCK. Cysteine 114 and cysteine 196 are disulfide-bonded. Residues 116-137 traverse the membrane as a helical segment; sequence TTTYFMGTSVSVSTFNLVAISL. Topologically, residues 138–157 are cytoplasmic; it reads ERYGAICRPLQSRVWQTKSH. A helical membrane pass occupies residues 158-178; the sequence is ALKVIAATWCLSFTIMTPYPI. Topologically, residues 179–210 are extracellular; the sequence is YSNLVPFTKNNNQTANMCRFLLPSDAMQQSWQ. Asparagine 190 is a glycosylation site (N-linked (GlcNAc...) asparagine). A helical transmembrane segment spans residues 211–234; it reads TFLLLILFLIPGVVMVVAYGLISL. Residues 235 to 321 lie on the Cytoplasmic side of the membrane; the sequence is ELYQGIKFDA…NLIAKKRVIR (87 aa). Positions 252–280 are disordered; the sequence is EKRLSSGGGGGGGSSSSRYEDSDGCYLQK. A helical membrane pass occupies residues 322 to 342; that stretch reads MLIVIVVLFFLCWMPIFSANA. Over 343 to 357 the chain is Extracellular; it reads WRAYDTVSAEKHLSG. Residues 358-381 form a helical membrane-spanning segment; that stretch reads TPISFILLLSYTSSCVNPIIYCFM. Over 382 to 436 the chain is Cytoplasmic; sequence NKRFRLGFMATFPCCPNPGPTGVRGEVGEEEDGRTIRASLSRYSYSHMSTSAPPH. Cysteine 395 carries the S-palmitoyl cysteine lipid modification.

Belongs to the G-protein coupled receptor 1 family.

The protein localises to the cell membrane. In terms of biological role, receptor for cholecystokinin. Mediates pancreatic growth and enzyme secretion, smooth muscle contraction of the gall bladder and stomach. Has a 1000-fold higher affinity for CCK rather than for gastrin. It modulates feeding and dopamine-induced behavior in the central and peripheral nervous system. This receptor mediates its action by association with G proteins that activate a phosphatidylinositol-calcium second messenger system. This Mus musculus (Mouse) protein is Cholecystokinin receptor type A (Cckar).